We begin with the raw amino-acid sequence, 117 residues long: uncharacterized protein (117 aa).

Positions 1–23 (MVSEAEFMAALAKFAETSATASA) are cleaved as a signal peptide.

This is an uncharacterized protein from Archaeoglobus fulgidus (strain ATCC 49558 / DSM 4304 / JCM 9628 / NBRC 100126 / VC-16).